The primary structure comprises 177 residues: Coatomer subunit zeta-1 (177 aa).

The protein belongs to the adaptor complexes small subunit family. In terms of assembly, oligomeric complex that consists of at least the alpha, beta, beta', gamma, delta, epsilon and zeta subunits.

Its subcellular location is the cytoplasm. It localises to the golgi apparatus membrane. The protein resides in the cytoplasmic vesicle. The protein localises to the COPI-coated vesicle membrane. In terms of biological role, the coatomer is a cytosolic protein complex that binds to dilysine motifs and reversibly associates with Golgi non-clathrin-coated vesicles, which further mediate biosynthetic protein transport from the ER, via the Golgi up to the trans Golgi network. Coatomer complex is required for budding from Golgi membranes, and is essential for the retrograde Golgi-to-ER transport of dilysine-tagged proteins. The zeta subunit may be involved in regulating the coat assembly and, hence, the rate of biosynthetic protein transport due to its association-dissociation properties with the coatomer complex. This is Coatomer subunit zeta-1 (COPZ1) from Oryza sativa subsp. japonica (Rice).